Consider the following 7311-residue polypeptide: MAM and LDL-receptor class A domain-containing protein 2 (7311 aa).

16 consecutive MAM domains span residues 4–171 (AYCD…SCVT), 199–361 (LDCD…FCSP), 363–530 (KQCT…VCPP), 532–695 (GDCN…NCPV), 727–887 (YDCT…QCPV), 889–1050 (MQCS…ACPL), 1052–1220 (GDCT…RCRL), 1228–1392 (FDCN…SCPS), 1394–1557 (GMCS…SCPA), 1559–1722 (GDCS…NCIQ), 1755–1918 (NDCN…KCPS), 1920–2087 (TDCT…PCPL), 2089–2254 (GDCD…RCSV), 2274–2437 (NNCT…PCPP), 2439–2601 (TVCD…PCPP), and 2603–2771 (GSCD…YCVG). The tract at residues 2461 to 2481 (WKRDSGGTPSAGTGPSRDHTT) is disordered. Over residues 2466–2475 (GGTPSAGTGP) the composition is skewed to low complexity. P-type domains are found at residues 2771–2817 (GLCS…FYHP) and 2818–2862 (SACA…FHGP). 6 disulfide bridges follow: cysteine 2773–cysteine 2802, cysteine 2784–cysteine 2801, cysteine 2795–cysteine 2813, cysteine 2820–cysteine 2847, cysteine 2831–cysteine 2846, and cysteine 2841–cysteine 2858. MAM domains are found at residues 2883–3048 (WDCT…TCPP), 3050–3214 (RECD…PCPP), 3216–3384 (GSCD…FCPS), and 3429–3587 (GACT…NCTL). The 36-residue stretch at 3593–3628 (SCGQQHRCIRGSCIDRGRVCDYTDDCGDNSDEQNCY) folds into the LDL-receptor class A 1 domain. 3 cysteine pairs are disulfide-bonded: cysteine 3594/cysteine 3605, cysteine 3600/cysteine 3618, and cysteine 3612/cysteine 3627. One can recognise an MAM 21 domain in the interval 3632-3794 (YRCSFEKSLC…DLSMTSSCQS (163 aa)). 2 consecutive LDL-receptor class A domains span residues 3814-3850 (PCPR…VNCG) and 4016-4054 (SCIS…STCA). 3 disulfides stabilise this stretch: cysteine 3815/cysteine 3827, cysteine 3822/cysteine 3840, and cysteine 3834/cysteine 3849. Positions 3850–4011 (GSCSFEPGLC…DDVTFQGCAL (162 aa)) constitute an MAM 22 domain. 3 cysteine pairs are disulfide-bonded: cysteine 4017–cysteine 4029, cysteine 4024–cysteine 4042, and cysteine 4036–cysteine 4053. The MAM 23 domain maps to 4058 to 4221 (ERCNFEQDLC…DVSFTPNCRP (164 aa)). The 38-residue stretch at 4239–4276 (GCQPGKFKCANGGNCISVSKVCNFYSDCSGGSDEMNCP) folds into the LDL-receptor class A 4 domain. Cystine bridges form between cysteine 4240-cysteine 4253, cysteine 4247-cysteine 4266, and cysteine 4260-cysteine 4275. The MAM 24 domain maps to 4277 to 4438 (ATCNFQNSFC…DDVSFEHCAE (162 aa)). The LDL-receptor class A 5 domain maps to 4444–4483 (TCSGLSVFRCQSGHCIAMSGKCDFEPDCCDGSEETNIVCA). 3 disulfide bridges follow: cysteine 4445-cysteine 4458, cysteine 4453-cysteine 4471, and cysteine 4465-cysteine 4482. The 161-residue stretch at 4486 to 4646 (NRCNFEAGLC…DISFTPDCVV (161 aa)) folds into the MAM 25 domain. LDL-receptor class A domains lie at 4660 to 4699 (PTQP…DLCG) and 4859 to 4899 (YCSG…QSCS). 5 disulfides stabilise this stretch: cysteine 4668-cysteine 4687, cysteine 4681-cysteine 4698, cysteine 4860-cysteine 4876, cysteine 4871-cysteine 4889, and cysteine 4883-cysteine 4898. In terms of domain architecture, MAM 26 spans 4700–4862 (WPCDFQRGTC…NNYTLTYCSG (163 aa)). In terms of domain architecture, MAM 27 spans 4903–5063 (SRCTFENGLC…SIAMKPSCQQ (161 aa)). An LDL-receptor class A 8 domain is found at 5085–5122 (NCVLPQVPCVSDGKCVSPSQVCDFNLDCADASDERSCP). Cystine bridges form between cysteine 5086/cysteine 5099, cysteine 5093/cysteine 5112, and cysteine 5106/cysteine 5121. One can recognise an MAM 28 domain in the interval 5123–5281 (HMCTFESDQC…DDIKFVDCAL (159 aa)). The LDL-receptor class A 9 domain occupies 5287–5322 (SCPSQFTCARNSCVSNDYVCDFNDDCGDGSDETLCG). Cystine bridges form between cysteine 5288-cysteine 5299, cysteine 5294-cysteine 5312, and cysteine 5306-cysteine 5321. One can recognise an MAM 29 domain in the interval 5326-5489 (TRCDFSRGSC…DVSFTTGCKQ (164 aa)). An LDL-receptor class A 10 domain is found at 5513–5552 (QCTTAEFNCFNQGSGACIPSTQVCNFQPNCNDGVDEQNCA). 3 disulfide bridges follow: cysteine 5514/cysteine 5529, cysteine 5521/cysteine 5542, and cysteine 5536/cysteine 5551. In terms of domain architecture, MAM 30 spans 5554–5719 (TKCSFDGGDF…DDIEFLNCVP (166 aa)). The LDL-receptor class A 11 domain maps to 5725–5763 (KCTADEFQCARGGCIPKTSVCDFKADCMVGDVSDESSCS). 3 disulfide bridges follow: cysteine 5726–cysteine 5738, cysteine 5733–cysteine 5751, and cysteine 5745–cysteine 5762. The MAM 31 domain maps to 5768–5935 (GQCDFEHGLC…LTPGCQICTD (168 aa)). In terms of domain architecture, LDL-receptor class A 12 spans 5957-5993 (PCSLQQYVCKNLRCVDKAQICNFKDDCGDNSDELPCG). 3 disulfide bridges follow: cysteine 5958–cysteine 5970, cysteine 5965–cysteine 5983, and cysteine 5977–cysteine 5992. An MAM 32 domain is found at 5994 to 6156 (SNCTFEGDCY…DISFTDNCFV (163 aa)). A disordered region spans residues 6014-6034 (NFHWRRRNGKTPSVGTGPTND). The span at 6023–6034 (KTPSVGTGPTND) shows a compositional bias: polar residues. Positions 6161-6200 (TCTPNEVKCRTSGHCVAEQRVCDHVKDCNDGTDEDALICS) constitute an LDL-receptor class A 13 domain. 3 disulfides stabilise this stretch: cysteine 6162–cysteine 6175, cysteine 6169–cysteine 6188, and cysteine 6182–cysteine 6199. Positions 6204-6365 (ASCDFDVNWC…DISFSAGCYK (162 aa)) constitute an MAM 33 domain. The LDL-receptor class A 14 domain maps to 6377–6414 (RCSKVQFYCKADDLCINIHWKCDGEKDCTDGADEMLCP). 3 disulfide bridges follow: cysteine 6378/cysteine 6391, cysteine 6385/cysteine 6404, and cysteine 6398/cysteine 6413. 4 consecutive MAM domains span residues 6430–6590 (ANCN…NCAK), 6606–6779 (LDED…NCDF), 6808–6965 (GDCT…QCQF), and 7173–7311 (GSCN…YNNL).

Component of the acid-insoluble and acid-soluble organic matrix of the aragonitic skeleton (at protein level).

It is found in the secreted. The sequence is that of MAM and LDL-receptor class A domain-containing protein 2 from Acropora millepora (Staghorn coral).